The chain runs to 130 residues: Abscisic acid and environmental stress-inducible protein TAS14 (130 aa).

The segment at 1–130 (MAQYGNQDQM…KIKDKIPGMH (130 aa)) is disordered. Residues 27-58 (QGTGTGGMMGGTGTGGMMGGTGGEYGTQGMGT) show a composition bias toward gly residues. Basic and acidic residues-rich tracts occupy residues 61–73 (HHHE…RRSD) and 92–130 (KEKI…PGMH).

The protein belongs to the plant dehydrin family.

The polypeptide is Abscisic acid and environmental stress-inducible protein TAS14 (TAS14) (Solanum lycopersicum (Tomato)).